Consider the following 119-residue polypeptide: Large ribosomal subunit protein bL20c (119 aa).

The protein belongs to the bacterial ribosomal protein bL20 family.

The protein localises to the plastid. It localises to the chloroplast. Binds directly to 23S ribosomal RNA and is necessary for the in vitro assembly process of the 50S ribosomal subunit. It is not involved in the protein synthesizing functions of that subunit. The sequence is that of Large ribosomal subunit protein bL20c (rpl20) from Pinus thunbergii (Japanese black pine).